Here is a 435-residue protein sequence, read N- to C-terminus: Methylenetetrahydrofolate--tRNA-(uracil-5-)-methyltransferase TrmFO (435 aa).

10 to 15 (GAGLAG) provides a ligand contact to FAD.

This sequence belongs to the MnmG family. TrmFO subfamily. The cofactor is FAD.

The protein localises to the cytoplasm. It carries out the reaction uridine(54) in tRNA + (6R)-5,10-methylene-5,6,7,8-tetrahydrofolate + NADH + H(+) = 5-methyluridine(54) in tRNA + (6S)-5,6,7,8-tetrahydrofolate + NAD(+). It catalyses the reaction uridine(54) in tRNA + (6R)-5,10-methylene-5,6,7,8-tetrahydrofolate + NADPH + H(+) = 5-methyluridine(54) in tRNA + (6S)-5,6,7,8-tetrahydrofolate + NADP(+). Functionally, catalyzes the folate-dependent formation of 5-methyl-uridine at position 54 (M-5-U54) in all tRNAs. This is Methylenetetrahydrofolate--tRNA-(uracil-5-)-methyltransferase TrmFO from Bacillus velezensis (strain DSM 23117 / BGSC 10A6 / LMG 26770 / FZB42) (Bacillus amyloliquefaciens subsp. plantarum).